Here is a 141-residue protein sequence, read N- to C-terminus: Nucleoside triphosphatase NudI (141 aa).

The region spanning 1–141 is the Nudix hydrolase domain; sequence MRQRTIVCPL…RHTLALKGLL (141 aa). Residues 38 to 59 carry the Nudix box motif; it reads GGVEPGERIEEALRREIREELG.

It belongs to the Nudix hydrolase family. NudI subfamily. As to quaternary structure, monomer. Mg(2+) is required as a cofactor.

The enzyme catalyses a ribonucleoside 5'-triphosphate + H2O = a ribonucleoside 5'-phosphate + diphosphate + H(+). It catalyses the reaction a 2'-deoxyribonucleoside 5'-triphosphate + H2O = a 2'-deoxyribonucleoside 5'-phosphate + diphosphate + H(+). It carries out the reaction dUTP + H2O = dUMP + diphosphate + H(+). The catalysed reaction is dTTP + H2O = dTMP + diphosphate + H(+). The enzyme catalyses dCTP + H2O = dCMP + diphosphate + H(+). Functionally, catalyzes the hydrolysis of nucleoside triphosphates, with a preference for pyrimidine deoxynucleoside triphosphates (dUTP, dTTP and dCTP). This Salmonella paratyphi B (strain ATCC BAA-1250 / SPB7) protein is Nucleoside triphosphatase NudI.